Consider the following 89-residue polypeptide: Small ribosomal subunit protein uS14 (89 aa).

This sequence belongs to the universal ribosomal protein uS14 family. In terms of assembly, part of the 30S ribosomal subunit. Contacts proteins S3 and S10.

In terms of biological role, binds 16S rRNA, required for the assembly of 30S particles and may also be responsible for determining the conformation of the 16S rRNA at the A site. The sequence is that of Small ribosomal subunit protein uS14 from Chlorobium chlorochromatii (strain CaD3).